Reading from the N-terminus, the 652-residue chain is DNA ligase (652 aa).

NAD(+)-binding positions include 29-33 (DSEYD), 78-79 (SL), and Glu107. The active-site N6-AMP-lysine intermediate is Lys109. NAD(+) is bound by residues Arg130, Glu164, Lys278, and Lys302. 4 residues coordinate Zn(2+): Cys395, Cys398, Cys413, and Cys418. A BRCT domain is found at 577 to 652 (VADAALSGLT…VRDEAWLESL (76 aa)).

The protein belongs to the NAD-dependent DNA ligase family. LigA subfamily. Mg(2+) serves as cofactor. It depends on Mn(2+) as a cofactor.

It catalyses the reaction NAD(+) + (deoxyribonucleotide)n-3'-hydroxyl + 5'-phospho-(deoxyribonucleotide)m = (deoxyribonucleotide)n+m + AMP + beta-nicotinamide D-nucleotide.. DNA ligase that catalyzes the formation of phosphodiester linkages between 5'-phosphoryl and 3'-hydroxyl groups in double-stranded DNA using NAD as a coenzyme and as the energy source for the reaction. It is essential for DNA replication and repair of damaged DNA. This is DNA ligase from Streptococcus pneumoniae (strain Hungary19A-6).